Reading from the N-terminus, the 209-residue chain is Vacuolar protein sorting-associated protein 28 homolog (209 aa).

Residues 1–105 enclose the VPS28 N-terminal domain; that stretch reads MSQNSNLMRE…REGRPITVKD (105 aa). In terms of domain architecture, VPS28 C-terminal spans 109-205; that stretch reads NVLKHIASIV…AYQSFQKALN (97 aa).

Belongs to the VPS28 family. As to quaternary structure, component of the ESCRT-I complex (endosomal sorting complex required for transport I).

The protein resides in the endosome. Component of the ESCRT-I complex, a regulator of vesicular trafficking process. The polypeptide is Vacuolar protein sorting-associated protein 28 homolog (Caenorhabditis briggsae).